A 654-amino-acid polypeptide reads, in one-letter code: Fructose-1,6-bisphosphatase class 3 (654 aa).

Belongs to the FBPase class 3 family. Mn(2+) serves as cofactor.

The enzyme catalyses beta-D-fructose 1,6-bisphosphate + H2O = beta-D-fructose 6-phosphate + phosphate. Its pathway is carbohydrate biosynthesis; gluconeogenesis. The polypeptide is Fructose-1,6-bisphosphatase class 3 (Staphylococcus epidermidis (strain ATCC 35984 / DSM 28319 / BCRC 17069 / CCUG 31568 / BM 3577 / RP62A)).